The sequence spans 188 residues: Putative 3-methyladenine DNA glycosylase (188 aa).

Belongs to the DNA glycosylase MPG family.

This Ehrlichia ruminantium (Cowdria ruminantium) protein is Putative 3-methyladenine DNA glycosylase.